We begin with the raw amino-acid sequence, 122 residues long: Small ribosomal subunit protein uS13 (122 aa).

Residues Gly-95–Lys-122 are disordered.

This sequence belongs to the universal ribosomal protein uS13 family. Part of the 30S ribosomal subunit. Forms a loose heterodimer with protein S19. Forms two bridges to the 50S subunit in the 70S ribosome.

Its function is as follows. Located at the top of the head of the 30S subunit, it contacts several helices of the 16S rRNA. In the 70S ribosome it contacts the 23S rRNA (bridge B1a) and protein L5 of the 50S subunit (bridge B1b), connecting the 2 subunits; these bridges are implicated in subunit movement. Contacts the tRNAs in the A and P-sites. The protein is Small ribosomal subunit protein uS13 of Sphingopyxis alaskensis (strain DSM 13593 / LMG 18877 / RB2256) (Sphingomonas alaskensis).